Consider the following 91-residue polypeptide: Small ribosomal subunit protein bS20 (91 aa).

The segment at 72-91 (KNAASRQKSRLAKKLNGLSA) is disordered.

It belongs to the bacterial ribosomal protein bS20 family.

Its function is as follows. Binds directly to 16S ribosomal RNA. The protein is Small ribosomal subunit protein bS20 of Halalkalibacterium halodurans (strain ATCC BAA-125 / DSM 18197 / FERM 7344 / JCM 9153 / C-125) (Bacillus halodurans).